The following is a 474-amino-acid chain: MTKKLHIKTWGCQMNEYDSSKMADLLDATHGYQLTDVAEEADVLLLNTCSIREKAQEKVFHQLGRWRLLKEKNPDLIIGVGGCVASQEGEHIRQRAHYVDIIFGPQTLHRLPEMINSVRGDRSPVVDISFPEIEKFDRLPEPRAEGPTAFVSIMEGCNKYCTYCVVPYTRGEEVSRPSDDILFEIAQLAAQGVREVNLLGQNVNAWRGENYDGTTGTFADLLRLVAAIDGIDRIRFTTSHPIEFTDDIIEVYRDTPELVSFLHLPVQSGSDRVLNLMGRTHTALEYKAIIRKLRAARPDIQISSDFIVGFPGETNDDFEKTMKLIADVNFDMSYSFIFSARPGTPAADMVDDVPEEEKKQRLYILQERINQQAMAWSRRMLGTTQRILVEGTSRKNIMELSGRTENNRVVNFEGTPEMIGKFVDVEITDVYPNSLRGKVVRTEDEMGLRVAETPESVIARTRKENELGVGFYQP.

The MTTase N-terminal domain maps to 3 to 120; that stretch reads KKLHIKTWGC…LPEMINSVRG (118 aa). Residues Cys-12, Cys-49, Cys-83, Cys-157, Cys-161, and Cys-164 each coordinate [4Fe-4S] cluster. A Radical SAM core domain is found at 143–375; sequence RAEGPTAFVS…QERINQQAMA (233 aa). In terms of domain architecture, TRAM spans 378–441; that stretch reads RRMLGTTQRI…PNSLRGKVVR (64 aa).

This sequence belongs to the methylthiotransferase family. MiaB subfamily. In terms of assembly, monomer. Requires [4Fe-4S] cluster as cofactor.

It is found in the cytoplasm. It catalyses the reaction N(6)-dimethylallyladenosine(37) in tRNA + (sulfur carrier)-SH + AH2 + 2 S-adenosyl-L-methionine = 2-methylsulfanyl-N(6)-dimethylallyladenosine(37) in tRNA + (sulfur carrier)-H + 5'-deoxyadenosine + L-methionine + A + S-adenosyl-L-homocysteine + 2 H(+). Catalyzes the methylthiolation of N6-(dimethylallyl)adenosine (i(6)A), leading to the formation of 2-methylthio-N6-(dimethylallyl)adenosine (ms(2)i(6)A) at position 37 in tRNAs that read codons beginning with uridine. The chain is tRNA-2-methylthio-N(6)-dimethylallyladenosine synthase from Salmonella enteritidis PT4 (strain P125109).